An 829-amino-acid chain; its full sequence is Disintegrin and metalloproteinase domain-containing protein 23 (829 aa).

The first 55 residues, 1–55 (MKPPGSISRRPTLTGCSLPGASCGPGRCPAGPVPARAPPCRLLLVLLLLPALATS), serve as a signal peptide directing secretion. A propeptide spanning residues 56-283 (SRPRARGAAA…ELQWLRRRKR (228 aa)) is cleaved from the precursor. Asn-72, Asn-92, Asn-97, and Asn-260 each carry an N-linked (GlcNAc...) asparagine glycan. The Extracellular segment spans residues 284–789 (AVNPSRGVFE…EGPKGPSATN (506 aa)). Residues 296-493 (KYLELMIVND…GGGACLFNRP (198 aa)) enclose the Peptidase M12B domain. 3 disulfides stabilise this stretch: Cys-405–Cys-488, Cys-447–Cys-472, and Cys-449–Cys-456. One can recognise a Disintegrin domain in the interval 499–585 (PTECGNGYVE…QCPPNLHKQD (87 aa)). Asn-544 and Asn-545 each carry an N-linked (GlcNAc...) asparagine glycan. The cysteines at positions 557 and 577 are disulfide-linked. N-linked (GlcNAc...) asparagine glycans are attached at residues Asn-661 and Asn-729. The 38-residue stretch at 729–766 (NMSSCPLDSRGKVCSGHGVCSNEATCICDFTWAGTDCS) folds into the EGF-like domain. Disulfide bonds link Cys-733-Cys-748, Cys-742-Cys-754, and Cys-756-Cys-765. The chain crosses the membrane as a helical span at residues 790–810 (LIIGSIAGAILVAAIVLGGTG). Over 811–829 (WGFKNVKKRRFDPTQQGPI) the chain is Cytoplasmic.

Can bind to LGI1 and LGI4. In terms of tissue distribution, brain specific.

Its subcellular location is the cell membrane. The protein resides in the secreted. Functionally, may play a role in cell-cell and cell-matrix interactions. This is a non-catalytic metalloprotease-like protein. This chain is Disintegrin and metalloproteinase domain-containing protein 23 (Adam23), found in Mus musculus (Mouse).